The primary structure comprises 366 residues: MVRCGCALLRKYGNFIDNLRIFTKGGSGGMGYPRLGGEGGRGGDVWVVAHKNMTLKQLKNKYPQKRFVAGGGANSRVSALQGSKGKDCEVPAPVGISVTDENGQVLGELNKEEDRVLVAKGGLGGKLHTNFLPLKGQKRIVHLDLKVIADVGLVGFPNAGKSSLLSRVSHATPVIADYAFTTLRPELGKIMYNDFKQISVADLPGLIEGAHMNKGMGHKFLKHLERTRQLLFVVDISGFQLSSVTPYRTAFETIILLTKELELYKEELQTKPALLAINKMDLPDAQVKLQELMKQLLSPEDFLHLFETKMIPEKALEFQHIVPISTVTGEGIAELKSCIRKALDEQDGKESDAHRSKQLLNLQSSS.

The 136-residue stretch at 13 to 148 (GNFIDNLRIF…RIVHLDLKVI (136 aa)) folds into the Obg domain. Positions 149–344 (ADVGLVGFPN…LKSCIRKALD (196 aa)) constitute an OBG-type G domain. GTP is bound by residues 155 to 162 (GFPNAGKS), 202 to 206 (DLPGL), and 278 to 281 (NKMD). The span at 346-355 (QDGKESDAHR) shows a compositional bias: basic and acidic residues. Residues 346–366 (QDGKESDAHRSKQLLNLQSSS) are disordered.

It belongs to the TRAFAC class OBG-HflX-like GTPase superfamily. OBG GTPase family.

Its subcellular location is the nucleus. It is found in the nucleolus. May be involved in the ribosome maturation process. The polypeptide is GTP-binding protein 10 (Gtpbp10) (Mus musculus (Mouse)).